Consider the following 621-residue polypeptide: Chaperone protein HtpG (621 aa).

The a; substrate-binding stretch occupies residues 1–341 (MSNQEYTFQT…SEDLPLNVSR (341 aa)). The b stretch occupies residues 342-547 (EILQQNKILA…GDEQNAMMAN (206 aa)). The tract at residues 548–621 (LMRQMGQNMP…RLNSVLLKAL (74 aa)) is c.

The protein belongs to the heat shock protein 90 family. In terms of assembly, homodimer.

Its subcellular location is the cytoplasm. Functionally, molecular chaperone. Has ATPase activity. In Helicobacter acinonychis (strain Sheeba), this protein is Chaperone protein HtpG.